We begin with the raw amino-acid sequence, 285 residues long: Eukaryotic translation initiation factor 3 subunit F-2 (285 aa).

The MPN domain occupies 11–145; the sequence is VVLQPLVLFQ…TRLYCGVEMG (135 aa).

It belongs to the eIF-3 subunit F family. As to quaternary structure, component of the eukaryotic translation initiation factor 3 (eIF-3) complex. The eIF-3 complex interacts with pix.

Its subcellular location is the cytoplasm. Component of the eukaryotic translation initiation factor 3 (eIF-3) complex, which is involved in protein synthesis of a specialized repertoire of mRNAs and, together with other initiation factors, stimulates binding of mRNA and methionyl-tRNAi to the 40S ribosome. The eIF-3 complex specifically targets and initiates translation of a subset of mRNAs involved in cell proliferation. The protein is Eukaryotic translation initiation factor 3 subunit F-2 of Drosophila ananassae (Fruit fly).